The sequence spans 72 residues: Brevinin-2GHc (72 aa).

The first 22 residues, 1-22, serve as a signal peptide directing secretion; it reads MFTMKKSLLLLFFLGMISLSLC. The propeptide occupies 23–42; it reads EQERGADEDEGEVEEQIKRS. C64 and C70 are joined by a disulfide.

As to expression, expressed by the skin glands.

The protein localises to the secreted. In terms of biological role, antimicrobial peptide. Active against the Gram-positive bacteria S.aureus FDA209P (MIC=9.8 ug/ml) and B.subtilis ATCC 6633 (MIC&gt;64 ug/ml), and the Gram-negative bacteria E.coli O111 (MIC=19.6 ug/ml) and E.coli ATCC 25922 (MIC=9.8 ug/ml). Not active against the fungus C.albicans. This chain is Brevinin-2GHc, found in Sylvirana guentheri (Gunther's frog).